The primary structure comprises 156 residues: MENRERAGAGAVGSAGSLGLRVEQAVFSSASLLFMSVGVEFFSYTAFCFLVTIMGLVIPWSCTLAMIDVYSILVGCPLRVPGVMVIVVIGDWVLAILSLAAASSSAAVIDLLLQFHGSHCSPRFCGRYQLSAMMAFLSWFLTAASSLFNLWFIASR.

Topologically, residues 1-24 (MENRERAGAGAVGSAGSLGLRVEQ) are cytoplasmic. The helical transmembrane segment at 25–45 (AVFSSASLLFMSVGVEFFSYT) threads the bilayer. Residue Ala-46 is a topological domain, extracellular. A helical transmembrane segment spans residues 47 to 67 (FCFLVTIMGLVIPWSCTLAMI). Over 68–81 (DVYSILVGCPLRVP) the chain is Cytoplasmic. The helical transmembrane segment at 82–102 (GVMVIVVIGDWVLAILSLAAA) threads the bilayer. Over 103-132 (SSSAAVIDLLLQFHGSHCSPRFCGRYQLSA) the chain is Extracellular. The chain crosses the membrane as a helical span at residues 133 to 153 (MMAFLSWFLTAASSLFNLWFI). Residues 154-156 (ASR) lie on the Cytoplasmic side of the membrane.

Belongs to the Casparian strip membrane proteins (CASP) family. Homodimer and heterodimers.

The protein resides in the cell membrane. This chain is CASP-like protein 5C1, found in Oryza sativa subsp. indica (Rice).